An 835-amino-acid chain; its full sequence is Phenylalanine--tRNA ligase beta subunit (835 aa).

The tRNA-binding domain occupies 44–160; the sequence is PATTGPLVLG…ESGQPGDDAR (117 aa). The B5 domain occupies 419–494; it reads PTMPSITMPV…RLEGLEAIPT (76 aa). 4 residues coordinate Mg(2+): aspartate 472, aspartate 478, glutamate 481, and glutamate 482. The region spanning 741 to 834 is the FDX-ACB domain; sequence SAFPALHQDI…AKERLGAEMR (94 aa).

Belongs to the phenylalanyl-tRNA synthetase beta subunit family. Type 1 subfamily. Tetramer of two alpha and two beta subunits. The cofactor is Mg(2+).

The protein resides in the cytoplasm. It carries out the reaction tRNA(Phe) + L-phenylalanine + ATP = L-phenylalanyl-tRNA(Phe) + AMP + diphosphate + H(+). The polypeptide is Phenylalanine--tRNA ligase beta subunit (Corynebacterium efficiens (strain DSM 44549 / YS-314 / AJ 12310 / JCM 11189 / NBRC 100395)).